We begin with the raw amino-acid sequence, 424 residues long: 3-phosphoshikimate 1-carboxyvinyltransferase (424 aa).

3-phosphoshikimate is bound by residues lysine 21, serine 22, and arginine 26. Lysine 21 contributes to the phosphoenolpyruvate binding site. Residues glycine 92 and arginine 120 each contribute to the phosphoenolpyruvate site. 3-phosphoshikimate-binding residues include serine 163, serine 164, glutamine 165, serine 191, aspartate 306, and lysine 333. Glutamine 165 is a phosphoenolpyruvate binding site. The active-site Proton acceptor is aspartate 306. Residues arginine 337, arginine 379, and lysine 405 each contribute to the phosphoenolpyruvate site.

Belongs to the EPSP synthase family. Monomer.

The protein resides in the cytoplasm. The catalysed reaction is 3-phosphoshikimate + phosphoenolpyruvate = 5-O-(1-carboxyvinyl)-3-phosphoshikimate + phosphate. Its pathway is metabolic intermediate biosynthesis; chorismate biosynthesis; chorismate from D-erythrose 4-phosphate and phosphoenolpyruvate: step 6/7. In terms of biological role, catalyzes the transfer of the enolpyruvyl moiety of phosphoenolpyruvate (PEP) to the 5-hydroxyl of shikimate-3-phosphate (S3P) to produce enolpyruvyl shikimate-3-phosphate and inorganic phosphate. This chain is 3-phosphoshikimate 1-carboxyvinyltransferase, found in Clostridium perfringens (strain SM101 / Type A).